A 494-amino-acid chain; its full sequence is uncharacterized protein (494 aa).

This is an uncharacterized protein from Acanthamoeba polyphaga (Amoeba).